A 505-amino-acid polypeptide reads, in one-letter code: MTHPSDTGPAPVLALEDISKSFGAVRALRDVSLELFPGEVHALAGENGAGKSTLIKTLAGVHRPDAGQVLLDGRPTVFHGPADARDAGIAVIYQEPTLFPDLSIAENIYMGRRPRRSFGRIDHKATRAATAALMRRLGVELDPERPARGLSIADQQIVEIAKALSFDARVLIMDEPTAALTGSEVARLFGVVRTLREQGAAVLFISHRLEEIFQICQRVTTLRDGALISSEPLDGMTEDDLVRRMVGRDLDELYPKQEVRAGEVAMSVRRLTREGVFTDVSFDVRRGEIVGLAGLVGAGRTEVARAVFGIDRWDAGEVEVEGRRLTNGAPSTAMAAGLALVPEDRRAQGLVMNMSIERNIGLTGLRTTVRAGLVDRGAERSRSLDWAAKLQVKYARIADAVSTLSGGNQQKVVLAKWLATGPRVLIVDEPTRGIDVGTKAEVHRLLSALAADGVAVLMISSDLPEILGMADRVLVMHEGRVTAEIPRSEATEESVMAAATGRAAA.

2 consecutive ABC transporter domains span residues 13 to 249 (LALE…VGRD) and 259 to 503 (VRAG…TGRA). Residue 45-52 (GENGAGKS) coordinates ATP.

The protein belongs to the ABC transporter superfamily. Ribose importer (TC 3.A.1.2.1) family. As to quaternary structure, the complex is composed of an ATP-binding protein (RbsA), two transmembrane proteins (RbsC) and a solute-binding protein (RbsB).

It localises to the cell membrane. It carries out the reaction D-ribose(out) + ATP + H2O = D-ribose(in) + ADP + phosphate + H(+). Functionally, part of the ABC transporter complex RbsABC involved in ribose import. Responsible for energy coupling to the transport system. This is Ribose import ATP-binding protein RbsA 2 from Streptomyces avermitilis (strain ATCC 31267 / DSM 46492 / JCM 5070 / NBRC 14893 / NCIMB 12804 / NRRL 8165 / MA-4680).